The sequence spans 2537 residues: Centrosomal protein of 192 kDa (2537 aa).

Disordered regions lie at residues 69–138 and 288–308; these read FSVP…ATES and HSSE…LPGT. Residues 70-81 are compositionally biased toward low complexity; it reads SVPSGSSPGSQS. The span at 106–122 shows a compositional bias: polar residues; that stretch reads VESQRLSNALSKQSALQ. A compositionally biased stretch (basic and acidic residues) spans 288–298; it reads HSSETTHKESE. Serine 812 is subject to Phosphoserine. Disordered stretches follow at residues 950-1021, 1043-1064, 1101-1158, and 1182-1234; these read VTFE…QQQP, VSEP…DRKS, KGTL…WTSN, and ATSH…STVH. Residues 960–970 show a composition bias toward polar residues; it reads PKNSDLKNTSP. The span at 984-1005 shows a compositional bias: low complexity; that stretch reads FRPSTSPLSHSSPSEISGTSSS. Composition is skewed to polar residues over residues 1046 to 1055 and 1103 to 1112; these read PESSYPTTAT and TLSSIIQNNS. A compositionally biased stretch (basic and acidic residues) spans 1128–1141; sequence EYVKPDFRWSKDPS. Polar residues predominate over residues 1142–1158; that stretch reads SKSGNLLETSEVGWTSN. Positions 1195-1207 are enriched in basic and acidic residues; the sequence is EDQRISPKDKSTA. Positions 1213–1234 are enriched in polar residues; sequence GQVSHQTTSENQCTPIPSSTVH. A phosphoserine mark is found at serine 1755, serine 2098, and serine 2110. Proline 2313 carries the post-translational modification Hydroxyproline.

Interacts with SHBG. Interacts with PLK4; this interaction mediates the formation of a ternary complex composed by PLK4, TENT5C and CEP192. Interacts with CCDC66. Hydroxylation by PHD1/EGLN2 at Pro-2313 promotes ubiquitination. Post-translationally, ubiquitinated by a SCF(SKP2) complex following proline hydroxylation. In terms of processing, ubiquitinated in a FBXL13-dependent manner, leading to proteasomal degradation.

It is found in the cytoplasm. The protein localises to the cytoskeleton. It localises to the microtubule organizing center. Its subcellular location is the centrosome. The protein resides in the centriole. In terms of biological role, required for mitotic centrosome maturation and bipolar spindle assembly. Appears to be a major regulator of pericentriolar material (PCM) recruitment, centrosome maturation, and centriole duplication. Centrosome-specific activating scaffold for AURKA and PLK1. The polypeptide is Centrosomal protein of 192 kDa (Homo sapiens (Human)).